Consider the following 346-residue polypeptide: MRILQETSLAAFHTFGIESQAYALIEAESVDDLLLIWRDKQYQTLPKLVLGKGSNLLFCDDFSGVVVLNRIKGITVNETQESYLLHVGAGEDWHGFVQWTIEHNMPGLENLALIPGCVGSSPIQNIGAYGVELQDICQYVDILNIDSGEVSRLSRKECQFGYRDSVFKHELKETHIIVAVGFTLKKEWEPKTTYGPLAELNKTTVAAIDVFNAVCRIRQSKLPDPQVLGNAGSFFKNPVITQSIKDALLYQYPQMPNYKVSNLEYKLAAGWLIDQCDLKGMQIGGAKVHEQQALVLVNTGNATARDVLLLAQHVVNAVNDKFGVLLEHEVRFMGASKETTLSEVLA.

In terms of domain architecture, FAD-binding PCMH-type spans 17–187 (IESQAYALIE…VAVGFTLKKE (171 aa)). R163 is an active-site residue. The active-site Proton donor is S233. The active site involves E329.

The protein belongs to the MurB family. The cofactor is FAD.

The protein resides in the cytoplasm. The enzyme catalyses UDP-N-acetyl-alpha-D-muramate + NADP(+) = UDP-N-acetyl-3-O-(1-carboxyvinyl)-alpha-D-glucosamine + NADPH + H(+). It functions in the pathway cell wall biogenesis; peptidoglycan biosynthesis. Functionally, cell wall formation. This is UDP-N-acetylenolpyruvoylglucosamine reductase from Photobacterium profundum (strain SS9).